Here is a 385-residue protein sequence, read N- to C-terminus: Protein pelota homolog (385 aa).

Lys-162 participates in a covalent cross-link: Glycyl lysine isopeptide (Lys-Gly) (interchain with G-Cter in SUMO2). 4 positions are modified to phosphoserine: Ser-374, Ser-380, Ser-381, and Ser-382.

It belongs to the eukaryotic release factor 1 family. Pelota subfamily. In terms of assembly, component of the Pelota-HBS1L complex, also named Dom34-Hbs1 complex, composed of PELO and HBS1L. Interacts with PINK1. Interacts with ABCE1. Interacts with CNOT4. Requires a divalent metal cation as cofactor.

Its subcellular location is the cytoplasm. Functionally, component of the Pelota-HBS1L complex, a complex that recognizes stalled ribosomes and triggers the No-Go Decay (NGD) pathway. In the Pelota-HBS1L complex, PELO recognizes ribosomes stalled at the 3' end of an mRNA and engages stalled ribosomes by destabilizing mRNA in the mRNA channel. Following mRNA extraction from stalled ribosomes by the SKI complex, the Pelota-HBS1L complex promotes recruitment of ABCE1, which drives the disassembly of stalled ribosomes, followed by degradation of damaged mRNAs as part of the NGD pathway. As part of the PINK1-regulated signaling, upon mitochondrial damage is recruited to the ribosome/mRNA-ribonucleoprotein complex associated to mitochondrial outer membrane thereby enabling the recruitment of autophagy receptors and induction of mitophagy. The protein is Protein pelota homolog (Pelo) of Rattus norvegicus (Rat).